The sequence spans 804 residues: G-type lectin S-receptor-like serine/threonine-protein kinase At1g61500 (804 aa).

The N-terminal stretch at 1-24 (MMTRFACLHLFTMFLFTLLSGSSS) is a signal peptide. The region spanning 25–145 (AVITTESPLS…VSERALWQSF (121 aa)) is the Bulb-type lectin domain. Over 25–427 (AVITTESPLS…ELDGNKRKKT (403 aa)) the chain is Extracellular. Asn-54, Asn-135, and Asn-237 each carry an N-linked (GlcNAc...) asparagine glycan. One can recognise an EGF-like; atypical domain in the interval 279–315 (PKKLCDFYGACGPFGLCVMSPSPMCKCFRGFVPKSVE). 2 cysteine pairs are disulfide-bonded: Cys-283–Cys-295 and Cys-289–Cys-303. Residues Asn-321, Asn-337, and Asn-376 are each glycosylated (N-linked (GlcNAc...) asparagine). Residues 334–416 (CLGNSTGEDA…GELLSIRLAR (83 aa)) form the PAN domain. 2 disulfide bridges follow: Cys-369–Cys-390 and Cys-373–Cys-379. Residues 428–448 (IVASIVSLTLFMILGFTAFGV) traverse the membrane as a helical segment. Residues 449–804 (WRCRVEHIAH…GMTQSVILGR (356 aa)) lie on the Cytoplasmic side of the membrane. Residues 491-776 (FSLSNKLGQG…DLPSPKQPTF (286 aa)) enclose the Protein kinase domain. ATP-binding positions include 497-505 (LGQGGFGSV) and Lys-519. Phosphoserine is present on residues Ser-525 and Ser-540. A caM-binding region spans residues 580–597 (RKRLEIDWPKRFDIIQGI). Asp-616 functions as the Proton acceptor in the catalytic mechanism. Phosphoserine occurs at positions 620 and 633. Thr-650 carries the phosphothreonine modification. A phosphoserine mark is found at Ser-693 and Ser-787.

Belongs to the protein kinase superfamily. Ser/Thr protein kinase family.

It localises to the cell membrane. It catalyses the reaction L-seryl-[protein] + ATP = O-phospho-L-seryl-[protein] + ADP + H(+). It carries out the reaction L-threonyl-[protein] + ATP = O-phospho-L-threonyl-[protein] + ADP + H(+). This Arabidopsis thaliana (Mouse-ear cress) protein is G-type lectin S-receptor-like serine/threonine-protein kinase At1g61500.